Here is a 622-residue protein sequence, read N- to C-terminus: MAMMVFPREEKLSQDEIVLGTKAVIQGLETLRGEHRALLAPLVAPEAGEAEPGSQERCILLRRSLEAIELGLGEAQVILALSSHLGAVESEKQKLRAQVRRLVQENQWLREELAGTQQKLQRSEQAVAQLEEEKQHLLFMSQIRKLDEDASPNEEKGDVPKDTLDDLFPNEDEQSPAPSPGGGDVSGQHGGYEIPARLRTLHNLVIQYASQGRYEVAVPLCKQALEDLEKTSGHDHPDVATMLNILALVYRDQNKYKEAAHLLNDALAIREKTLGKDHPAVAATLNNLAVLYGKRGKYKEAEPLCKRALEIREKVLGKFHPDVAKQLSNLALLCQNQGKAEEVEYYYRRALEIYATRLGPDDPNVAKTKNNLASCYLKQGKYQDAETLYKEILTRAHEKEFGSVNGDNKPIWMHAEEREESKDKRRDSAPYGEYGSWYKACKVDSPTVNTTLRSLGALYRRQGKLEAAHTLEDCASRNRKQGLDPASQTKVVELLKDGSGRRGDRRSSRDMAGGAGPRSESDLEDVGPTAEWNGDGSGSLRRSGSFGKLRDALRRSSEMLVKKLQGGTPQEPPNPRMKRASSLNFLNKSVEEPTQPGGTGLSDSRTLSSSSMDLSRRSSLVG.

Residues 78 to 143 (ILALSSHLGA…KQHLLFMSQI (66 aa)) adopt a coiled-coil conformation. The span at 145–164 (KLDEDASPNEEKGDVPKDTL) shows a compositional bias: basic and acidic residues. Positions 145–191 (KLDEDASPNEEKGDVPKDTLDDLFPNEDEQSPAPSPGGGDVSGQHGG) are disordered. Serine 151, serine 175, and serine 179 each carry phosphoserine. The span at 180 to 190 (PGGGDVSGQHG) shows a compositional bias: gly residues. TPR repeat units lie at residues 198–231 (LRTL…LEKT), 240–273 (ATML…REKT), 282–315 (AATL…REKV), 324–357 (AKQL…YATR), and 366–399 (AKTK…AHEK). Serine 445 is modified (phosphoserine). The TPR 6 repeat unit spans residues 449–482 (NTTLRSLGALYRRQGKLEAAHTLEDCASRNRKQG). Disordered regions lie at residues 476 to 548 (SRNR…SFGK) and 563 to 622 (KLQG…SLVG). Basic and acidic residues predominate over residues 493–509 (ELLKDGSGRRGDRRSSR). 2 positions are modified to phosphoserine: serine 508 and serine 521. Residues 538 to 547 (GSLRRSGSFG) show a composition bias toward low complexity. Residues serine 581, serine 582, serine 589, serine 608, serine 610, and serine 615 each carry the phosphoserine modification. The span at 601–622 (LSDSRTLSSSSMDLSRRSSLVG) shows a compositional bias: low complexity.

The protein belongs to the kinesin light chain family. As to quaternary structure, oligomeric complex composed of two heavy chains and two light chains. Interacts (via TPR repeats) with PLEKHM2.

The protein localises to the cytoplasm. The protein resides in the cytoskeleton. It localises to the lysosome membrane. In terms of biological role, kinesin is a microtubule-associated force-producing protein that plays a role in organelle transport. The light chain functions in coupling of cargo to the heavy chain or in the modulation of its ATPase activity. Through binding with PLEKHM2 and ARL8B, recruits kinesin-1 to lysosomes and hence direct lysosomes movement toward microtubule plus ends. This chain is Kinesin light chain 2, found in Homo sapiens (Human).